Consider the following 80-residue polypeptide: RNA-binding protein Hfq (80 aa).

The 61-residue stretch at 10-70 folds into the Sm domain; that stretch reads DIFLNNARKE…ISTVSPAKPI (61 aa).

The protein belongs to the Hfq family. Homohexamer.

RNA chaperone that binds small regulatory RNA (sRNAs) and mRNAs to facilitate mRNA translational regulation in response to envelope stress, environmental stress and changes in metabolite concentrations. Also binds with high specificity to tRNAs. This is RNA-binding protein Hfq from Clostridium perfringens (strain SM101 / Type A).